Consider the following 130-residue polypeptide: Small ribosomal subunit protein uS9 (130 aa).

Residues 98–130 (LKRAGLLTRDPRMKERKKPGLKKARRSPQFSKR) form a disordered region. Over residues 111–130 (KERKKPGLKKARRSPQFSKR) the composition is skewed to basic residues.

The protein belongs to the universal ribosomal protein uS9 family.

The chain is Small ribosomal subunit protein uS9 from Staphylococcus haemolyticus (strain JCSC1435).